Here is a 1233-residue protein sequence, read N- to C-terminus: Glutamate receptor ionotropic, NMDA 2C (1233 aa).

An N-terminal signal peptide occupies residues 1–19; that stretch reads MGGALGPALLLTSLFGAWA. The Extracellular segment spans residues 20-554; it reads GLGPGQGEQG…SAFLEPYSPA (535 aa). N-linked (GlcNAc...) asparagine glycosylation is found at Asn70 and Asn73. Cys82 and Cys317 form a disulfide bridge. Asn337 and Asn438 each carry an N-linked (GlcNAc...) asparagine glycan. Disulfide bonds link Cys426–Cys453 and Cys433–Cys454. Ser509, Thr511, and Arg516 together coordinate L-glutamate. An N-linked (GlcNAc...) asparagine glycan is attached at Asn539. Residues 555-575 traverse the membrane as a helical segment; it reads VWVMMFVMCLTVVAITVFMFE. The Cytoplasmic segment spans residues 576 to 598; sequence YFSPVSYNQNLTRGKKSGGPAFT. The discontinuously helical intramembrane region spans 599–611; sequence IGKSVWLLWALVF. Positions 601-620 are pore-forming; the sequence is KSVWLLWALVFNNSVPIENP. The Cytoplasmic portion of the chain corresponds to 612 to 626; sequence NNSVPIENPRGTTSK. Residues 627–644 traverse the membrane as a helical segment; it reads IMVLVWAFFAVIFLASYT. The Extracellular segment spans residues 645–813; that stretch reads ANLAAFMIQE…EVMSSKLDID (169 aa). N-linked (GlcNAc...) asparagine glycosylation occurs at Asn685. Residues Ser687, Thr688, and Asp729 each contribute to the L-glutamate site. A disulfide bridge links Cys743 with Cys798. A helical membrane pass occupies residues 814–836; sequence NMAGVFYMLLVAMGLALLVFAWE. At 837–1233 the chain is on the cytoplasmic side; that stretch reads HLVYWKLRHS…RRISSLESEV (397 aa). Phosphoserine is present on residues Ser875, Ser881, and Ser912. The interval 920–994 is disordered; it reads IENWGGGRRA…GPPLSDVSRV (75 aa). Composition is skewed to pro residues over residues 929–956 and 975–987; these read APPPSPCPTPRSGPSPCLPTPDPPPEPS and PQPPGRPPTPGPP. The short motif at 1231-1233 is the PDZ-binding element; the sequence is SEV.

The protein belongs to the glutamate-gated ion channel (TC 1.A.10.1) family. NR2C/GRIN2C subfamily. Heterotetramer. Forms heterotetrameric channels composed of two GluN1/zeta subunits (GRIN1), and two identical GluN2/epsilon subunits (GRIN2A, GRIN2B, GRIN2C or GRIN2D) or GluN3 subunits (GRIN3A or GRIN3B) (in vitro). In vivo, the subunit composition may depend on the expression levels of the different subunits. Interacts with PDZ domains of PATJ and DLG4. Interacts (via PDZ-binding motif) with SNX27 (via PDZ domain); the interaction is required for recycling to the plasma membrane when endocytosed and prevent degradation in lysosomes. As to expression, mainly expressed in brain with predominant expression is in the cerebellum, also present in the hippocampus, amygdala, caudate nucleus, corpus callosum, subthalamic nuclei and thalamus. Detected in the heart, skeletal muscle and pancreas.

The protein resides in the cell membrane. It localises to the postsynaptic cell membrane. It carries out the reaction Ca(2+)(in) = Ca(2+)(out). It catalyses the reaction Na(+)(in) = Na(+)(out). The enzyme catalyses K(+)(in) = K(+)(out). In terms of biological role, component of N-methyl-D-aspartate (NMDA) receptors (NMDARs) that function as heterotetrameric, ligand-gated cation channels with high calcium permeability and voltage-dependent block by Mg(2+). Participates in synaptic plasticity for learning and memory formation by contributing to the slow phase of excitatory postsynaptic current and long-term synaptic potentiation. Channel activation requires binding of the neurotransmitter L-glutamate to the GluN2 subunit, glycine or D-serine binding to the GluN1 subunit, plus membrane depolarization to eliminate channel inhibition by Mg(2+). NMDARs mediate simultaneously the potasium efflux and the influx of calcium and sodium. Each GluN2 subunit confers differential attributes to channel properties, including activation, deactivation and desensitization kinetics, pH sensitivity, Ca2(+) permeability, and binding to allosteric modulators. The protein is Glutamate receptor ionotropic, NMDA 2C of Homo sapiens (Human).